Here is a 254-residue protein sequence, read N- to C-terminus: uncharacterized protein (254 aa).

Residue C71 is the Acyl-thioester intermediate of the active site. Catalysis depends on residues H110 and D125.

The protein belongs to the arylamine N-acetyltransferase family.

This is an uncharacterized protein from Bacillus subtilis (strain 168).